A 693-amino-acid polypeptide reads, in one-letter code: Elongation factor G (693 aa).

One can recognise a tr-type G domain in the interval 8 to 282 (EKTRNIGIMA…AVIDYLPSPL (275 aa)). Residues 17–24 (AHIDAGKT), 81–85 (DTPGH), and 135–138 (NKMD) each bind GTP.

Belongs to the TRAFAC class translation factor GTPase superfamily. Classic translation factor GTPase family. EF-G/EF-2 subfamily.

Its subcellular location is the cytoplasm. Functionally, catalyzes the GTP-dependent ribosomal translocation step during translation elongation. During this step, the ribosome changes from the pre-translocational (PRE) to the post-translocational (POST) state as the newly formed A-site-bound peptidyl-tRNA and P-site-bound deacylated tRNA move to the P and E sites, respectively. Catalyzes the coordinated movement of the two tRNA molecules, the mRNA and conformational changes in the ribosome. The chain is Elongation factor G from Staphylococcus carnosus (strain TM300).